The primary structure comprises 352 residues: DNA polymerase IV (352 aa).

The UmuC domain maps to 4 to 185; that stretch reads IIHVDMDCFF…LPLSKIPGVG (182 aa). Mg(2+)-binding residues include aspartate 8 and aspartate 103. Residue glutamate 104 is part of the active site.

This sequence belongs to the DNA polymerase type-Y family. Monomer. It depends on Mg(2+) as a cofactor.

It localises to the cytoplasm. It carries out the reaction DNA(n) + a 2'-deoxyribonucleoside 5'-triphosphate = DNA(n+1) + diphosphate. Functionally, poorly processive, error-prone DNA polymerase involved in untargeted mutagenesis. Copies undamaged DNA at stalled replication forks, which arise in vivo from mismatched or misaligned primer ends. These misaligned primers can be extended by PolIV. Exhibits no 3'-5' exonuclease (proofreading) activity. May be involved in translesional synthesis, in conjunction with the beta clamp from PolIII. The protein is DNA polymerase IV of Yersinia pseudotuberculosis serotype O:1b (strain IP 31758).